Here is a 488-residue protein sequence, read N- to C-terminus: Probable glycine dehydrogenase (decarboxylating) subunit 2 (488 aa).

An N6-(pyridoxal phosphate)lysine modification is found at Lys-274.

It belongs to the GcvP family. C-terminal subunit subfamily. As to quaternary structure, the glycine cleavage system is composed of four proteins: P, T, L and H. In this organism, the P 'protein' is a heterodimer of two subunits. It depends on pyridoxal 5'-phosphate as a cofactor.

It carries out the reaction N(6)-[(R)-lipoyl]-L-lysyl-[glycine-cleavage complex H protein] + glycine + H(+) = N(6)-[(R)-S(8)-aminomethyldihydrolipoyl]-L-lysyl-[glycine-cleavage complex H protein] + CO2. Its function is as follows. The glycine cleavage system catalyzes the degradation of glycine. The P protein binds the alpha-amino group of glycine through its pyridoxal phosphate cofactor; CO(2) is released and the remaining methylamine moiety is then transferred to the lipoamide cofactor of the H protein. In Listeria innocua serovar 6a (strain ATCC BAA-680 / CLIP 11262), this protein is Probable glycine dehydrogenase (decarboxylating) subunit 2.